Consider the following 267-residue polypeptide: 4-hydroxy-tetrahydrodipicolinate reductase (267 aa).

Residues 8-13 (GAAGRM) and Asp34 contribute to the NAD(+) site. Arg35 contacts NADP(+). NAD(+) contacts are provided by residues 98–100 (GTT) and 122–125 (AANF). His155 (proton donor/acceptor) is an active-site residue. A (S)-2,3,4,5-tetrahydrodipicolinate-binding site is contributed by His156. Lys159 functions as the Proton donor in the catalytic mechanism. 165–166 (GT) serves as a coordination point for (S)-2,3,4,5-tetrahydrodipicolinate.

The protein belongs to the DapB family.

Its subcellular location is the cytoplasm. The catalysed reaction is (S)-2,3,4,5-tetrahydrodipicolinate + NAD(+) + H2O = (2S,4S)-4-hydroxy-2,3,4,5-tetrahydrodipicolinate + NADH + H(+). It carries out the reaction (S)-2,3,4,5-tetrahydrodipicolinate + NADP(+) + H2O = (2S,4S)-4-hydroxy-2,3,4,5-tetrahydrodipicolinate + NADPH + H(+). It functions in the pathway amino-acid biosynthesis; L-lysine biosynthesis via DAP pathway; (S)-tetrahydrodipicolinate from L-aspartate: step 4/4. Functionally, catalyzes the conversion of 4-hydroxy-tetrahydrodipicolinate (HTPA) to tetrahydrodipicolinate. The polypeptide is 4-hydroxy-tetrahydrodipicolinate reductase (Pseudomonas entomophila (strain L48)).